A 431-amino-acid chain; its full sequence is MFMSQIVDIRAREILDSRGNPTIEADVILESGVVGRACAPSGASTGSREALELRDGDKSRYLGKGVRTAVQNVNSSIHELLVGQSVFEQKALDEKMIAFDGTENKSKLGANATLAVSLAAAHAAAAEQKLPLFQYIANLRGQTTLTMPVPMMNILNGGAHADNTVDIQEFMIEPVGFTSFAEALRAGAEVFHSLKSVLKKQGLNTAVGDEGGFAPNLRSNEEAITVILQAIEQTGYKAGSDIMLALDCASSEFYKNGQYILEGEGNKSFTSNQFADYLAGLVKQYPIISIEDGLDESDWEGWSYLTSILGDKIQLVGDDLFVTNPKILQRGIDEKVGNSILIKYNQIGTLTETLDAIYLAKANGYTTVISHRSGETEDSTIADLAVGTAAGQIKTGSLCRSDRVSKYNQLLRIEELTKAVYRGKAEFKGLN.

Position 168 (Gln-168) interacts with (2R)-2-phosphoglycerate. Residue Glu-210 is the Proton donor of the active site. Residues Asp-247, Glu-291, and Asp-318 each coordinate Mg(2+). Residues Lys-343, Arg-372, Ser-373, and Lys-394 each contribute to the (2R)-2-phosphoglycerate site. The active-site Proton acceptor is Lys-343.

Belongs to the enolase family. In terms of assembly, component of the RNA degradosome, a multiprotein complex involved in RNA processing and mRNA degradation. Mg(2+) serves as cofactor.

The protein resides in the cytoplasm. It is found in the secreted. Its subcellular location is the cell surface. It catalyses the reaction (2R)-2-phosphoglycerate = phosphoenolpyruvate + H2O. It functions in the pathway carbohydrate degradation; glycolysis; pyruvate from D-glyceraldehyde 3-phosphate: step 4/5. In terms of biological role, catalyzes the reversible conversion of 2-phosphoglycerate (2-PG) into phosphoenolpyruvate (PEP). It is essential for the degradation of carbohydrates via glycolysis. The sequence is that of Enolase from Acinetobacter baumannii (strain AYE).